Here is a 1412-residue protein sequence, read N- to C-terminus: MKALLDLFKQVSQDEQFDAIKIGIASPEKIRSWSYGEVRKPETINYRTFKPERDGLFCSKIFGPIKDYECLCGKYKRLKHRGVICEKCGVEVTVAKVRRERMGHIELASPVAHIWFLKSLPSRLGMVLDMTLRDIERVLYFEAWCVIEPGMTPLKRGQIMSDDDFLAKTEEYGDDFRALMGAEAVRELLRTIDIDREVETLRGELKATSSEAKIKKISKRLKVLEGFQKSGIKAEWMVMEVLPVLPPDLRPLVPLDGGRFATSDLNDLYRRVINRNNRLKRLLELKAPEIILRNEKRMLQEAVDSLLDNGRRGKAMTGANKRQLKSLADMIKGKSGRFRQNLLGKRVDYSGRSVIVVGPQLKLHQCGLPKLMALELFKPFIFNRLEMMGLATTIKAAKKLVESQEPVVWDILEEVIREHPVMLNRAPTLHRLGIQAFEPVLIEGKAIQLHPLVCAAFNADFDGDQMAVHVPLSLEAQLEARTLMLASNNVLFPANGEPSIVPSQDIVLGLYYTTRERINGKGEGIFFTDVAEVQRAYDNGEVELQSRITVRLTEYERDDNGEFQPVLRRHETTVGRALLSEILPKGLPFTVLNKALKKKEISRLINQSFRRCGLRDTVIFADKLMQSGFRLATRGGISIAMGDMLIPKAKEGILAEASREVKEIDKQYSSGLVTSQERYNNVVDIWGKASDKVGKAMMEQLATEPVVNRHGEEVRQESFNSIYMMADSGARGSAAQIRQLAGMRGLMAKPDGSIIETPITANFREGLNVLQYFISTHGARKGLADTALKTANSGYLTRRLVDVTQDLVITEDDCGTTQGYAMKALVEGGEVIEPLRDRILGRVAAIDVVDPDTQETAIAAGTLLDEDLVDLIDRIGVDEVKVRTPLTCETRHGLCAHCYGRDLGRGSHVNVGEAVGVIAAQSIGEPGTQLTMRTFHIGGAASRSALASAVETKSTGKVGFASTMRYVTNAKGERVAISRSGELAIFDDNGRERERHKIPYGATVLVGDGEAVKAGTRLATWDPLTRPIVSEYGGAVRFENIEEGVTVAKQLDEITGLSTLVVITPKTRSGKTVTRPQIKLVNENGEDVKIAGTDHSVNISFPVGALITVRDGQQVAVGEVLARIPQESQKTRDITGGLPRVAELFEARSPKDAGMLADVTGTVSFGKDTKGKQRLVITDLEGVSHEFLIPKEKQVLVHDGQVVNKGEMIVDGPADPHDILRLQGIEKLATYIVDEVQDVYRLQGVKINDKHIEVIVRQMLRRVNIVDAGDTEFIPGEQVERSELLNENDRVTAEGKRPATYDNVLLGITKASLSTDSFISAASFQETTRVLTEAAIMGKRDDLRGLKENVIVGRLIPAGTGLAYHMARKDKEALEAAEREAARQLANPFEDAPVTVDADAPQSDAGQEGSAE.

C70, C72, C85, and C88 together coordinate Zn(2+). D460, D462, and D464 together coordinate Mg(2+). Zn(2+) contacts are provided by C814, C888, C895, and C898. The disordered stretch occupies residues 1378 to 1412 (EREAARQLANPFEDAPVTVDADAPQSDAGQEGSAE).

The protein belongs to the RNA polymerase beta' chain family. The RNAP catalytic core consists of 2 alpha, 1 beta, 1 beta' and 1 omega subunit. When a sigma factor is associated with the core the holoenzyme is formed, which can initiate transcription. Requires Mg(2+) as cofactor. Zn(2+) is required as a cofactor.

It catalyses the reaction RNA(n) + a ribonucleoside 5'-triphosphate = RNA(n+1) + diphosphate. In terms of biological role, DNA-dependent RNA polymerase catalyzes the transcription of DNA into RNA using the four ribonucleoside triphosphates as substrates. This chain is DNA-directed RNA polymerase subunit beta', found in Bordetella petrii (strain ATCC BAA-461 / DSM 12804 / CCUG 43448).